A 765-amino-acid polypeptide reads, in one-letter code: Cullin-5 (765 aa).

Positions 696 to 757 (RELRVQEGIV…NKYMERRADD (62 aa)) constitute a Cullin neddylation domain. Residue K709 forms a Glycyl lysine isopeptide (Lys-Gly) (interchain with G-Cter in NEDD8) linkage.

It belongs to the cullin family. Interacts with rbx-1 and rbx-2. In terms of processing, neddylated; which enhances the ubiquitination activity of SCF-like complex.

Its pathway is protein modification; protein ubiquitination. Probable core component of cullin-based SCF-like E3 ubiquitin-protein ligase complexes which mediate the ubiquitination and subsequent proteasomal degradation of target proteins. In association with rbx-2 seems to be involved in meiotic cell cycle progression in the germline. Required for phosphorylation of the MAP kinase MPK-1 in the germline. The protein is Cullin-5 (cul-5) of Caenorhabditis elegans.